Reading from the N-terminus, the 207-residue chain is dTTP/UTP pyrophosphatase (207 aa).

Asp-79 functions as the Proton acceptor in the catalytic mechanism.

It belongs to the Maf family. YhdE subfamily. A divalent metal cation is required as a cofactor.

It localises to the cytoplasm. The catalysed reaction is dTTP + H2O = dTMP + diphosphate + H(+). It carries out the reaction UTP + H2O = UMP + diphosphate + H(+). Functionally, nucleoside triphosphate pyrophosphatase that hydrolyzes dTTP and UTP. May have a dual role in cell division arrest and in preventing the incorporation of modified nucleotides into cellular nucleic acids. This is dTTP/UTP pyrophosphatase from Rhodopseudomonas palustris (strain BisB5).